A 285-amino-acid polypeptide reads, in one-letter code: 2-dehydro-3-deoxyphosphooctonate aldolase (285 aa).

Belongs to the KdsA family.

The protein localises to the cytoplasm. The catalysed reaction is D-arabinose 5-phosphate + phosphoenolpyruvate + H2O = 3-deoxy-alpha-D-manno-2-octulosonate-8-phosphate + phosphate. The protein operates within carbohydrate biosynthesis; 3-deoxy-D-manno-octulosonate biosynthesis; 3-deoxy-D-manno-octulosonate from D-ribulose 5-phosphate: step 2/3. It functions in the pathway bacterial outer membrane biogenesis; lipopolysaccharide biosynthesis. In Paracidovorax citrulli (strain AAC00-1) (Acidovorax citrulli), this protein is 2-dehydro-3-deoxyphosphooctonate aldolase.